A 513-amino-acid chain; its full sequence is Sugar transport protein 7 (513 aa).

Residues 1 to 26 are Cytoplasmic-facing; sequence MAGGSFGPTGVAKERAEQYQGKVTSY. A run of 12 helical transmembrane segments spans residues 27–47, 84–104, 121–141, 144–164, 171–191, 205–225, 286–306, 324–344, 351–371, 387–407, 427–447, and 452–472; these read VIIA…DIGI, GLAA…LVAS, ISFL…MLLA, IMLG…LSEV, GGLN…ANMV, LSLG…YFLP, LVMA…SILF, YSSA…IGLV, ALLI…AVIL, VIVV…WGPL, ITVA…LGLL, and FGIF…VYFL. The Cytoplasmic segment spans residues 473 to 513; the sequence is LPETKGVPIEEMTLLWSKHWFWKKVLPDATNLEDESKNVSV.

Belongs to the major facilitator superfamily. Sugar transporter (TC 2.A.1.1) family.

The protein localises to the cell membrane. Its function is as follows. Mediates an active uptake of hexoses, probably by sugar/hydrogen symport. This Arabidopsis thaliana (Mouse-ear cress) protein is Sugar transport protein 7 (STP7).